The sequence spans 335 residues: Nucleoid-associated protein YejK (335 aa).

Belongs to the YejK family.

It localises to the cytoplasm. The protein localises to the nucleoid. The sequence is that of Nucleoid-associated protein YejK from Salmonella enteritidis PT4 (strain P125109).